Reading from the N-terminus, the 43-residue chain is Neurotrophic factor BDNF (43 aa).

The protein belongs to the NGF-beta family.

It is found in the secreted. In terms of biological role, promotes the survival of neuronal populations that are all located either in the central nervous system or directly connected to it. The sequence is that of Neurotrophic factor BDNF (bdnf) from Raja clavata (Thornback ray).